We begin with the raw amino-acid sequence, 96 residues long: Small ribosomal subunit protein bS6 (96 aa).

The protein belongs to the bacterial ribosomal protein bS6 family.

In terms of biological role, binds together with bS18 to 16S ribosomal RNA. This chain is Small ribosomal subunit protein bS6, found in Streptomyces griseus subsp. griseus (strain JCM 4626 / CBS 651.72 / NBRC 13350 / KCC S-0626 / ISP 5235).